A 90-amino-acid polypeptide reads, in one-letter code: Cell division protein CrgA (90 aa).

The interval 1–26 is disordered; the sequence is MPKAKVTKNSIAPVSSNPSANRTPVK. A compositionally biased stretch (polar residues) spans 7–26; sequence TKNSIAPVSSNPSANRTPVK. Helical transmembrane passes span 38–58 and 69–89; these read VIMF…YLVG and AWNY…TMGW.

It belongs to the CrgA family.

The protein localises to the cell membrane. Its function is as follows. Involved in cell division. The protein is Cell division protein CrgA of Corynebacterium efficiens (strain DSM 44549 / YS-314 / AJ 12310 / JCM 11189 / NBRC 100395).